We begin with the raw amino-acid sequence, 475 residues long: MAMLGKRRPPRTANERVRRERGSATRRDDATADGLSIERLAHDGRGVARDPHGKTVFVDQALPGERVRVAVHRQRKRFDEAHVVERLATSPERATPPCAYYGRCGGCDLQHLDLEAQREHKRRTLDELFTRQGLTLPEIEVLAGEGLAYRRRARLGVKCDAEGTPHLGFRARGSEHLIDIDSCVVLEPVLSRLIAPLRACLVQLEAPRRVGHIELIATAEGACVVVRQLREVPGDEARWRRFAAEHDVTLAWRVGREAPTLRWLHAPRGEALHVTLVLDDTTLSLGCVPGDFLQINADVNARLVRTALAWLAPRGEERVLDLFAGVGNFTLALAPRVASITGIEGSPAMVERLADNARRAGLHQVGAQQSDLATQVPEVAAVDWVIMDPPRGGAEALCRALADSPVTTLLYVSCDPAALARDAARLVQGGYRIQRAALADMFPHTAHLESMLLLTRDTPRGRSTSVEREDHGQGP.

Residues 1–10 (MAMLGKRRPP) are compositionally biased toward basic residues. Residues 1-33 (MAMLGKRRPPRTANERVRRERGSATRRDDATAD) are disordered. The span at 13-30 (ANERVRRERGSATRRDDA) shows a compositional bias: basic and acidic residues. The region spanning 26–85 (RRDDATADGLSIERLAHDGRGVARDPHGKTVFVDQALPGERVRVAVHRQRKRFDEAHVVE) is the TRAM domain. C98, C104, C107, and C183 together coordinate [4Fe-4S] cluster. 6 residues coordinate S-adenosyl-L-methionine: Q294, F323, N328, E344, D371, and D388. The active-site Nucleophile is the C414. A disordered region spans residues 455–475 (TRDTPRGRSTSVEREDHGQGP). The segment covering 457 to 475 (DTPRGRSTSVEREDHGQGP) has biased composition (basic and acidic residues).

It belongs to the class I-like SAM-binding methyltransferase superfamily. RNA M5U methyltransferase family. RlmD subfamily.

It catalyses the reaction uridine(1939) in 23S rRNA + S-adenosyl-L-methionine = 5-methyluridine(1939) in 23S rRNA + S-adenosyl-L-homocysteine + H(+). Catalyzes the formation of 5-methyl-uridine at position 1939 (m5U1939) in 23S rRNA. The chain is 23S rRNA (uracil(1939)-C(5))-methyltransferase RlmD from Chromohalobacter salexigens (strain ATCC BAA-138 / DSM 3043 / CIP 106854 / NCIMB 13768 / 1H11).